Reading from the N-terminus, the 213-residue chain is Protein-L-isoaspartate O-methyltransferase 1 (213 aa).

Residue serine 64 is part of the active site.

It belongs to the methyltransferase superfamily. L-isoaspartyl/D-aspartyl protein methyltransferase family.

It is found in the cytoplasm. The enzyme catalyses [protein]-L-isoaspartate + S-adenosyl-L-methionine = [protein]-L-isoaspartate alpha-methyl ester + S-adenosyl-L-homocysteine. Functionally, catalyzes the methyl esterification of L-isoaspartyl residues in peptides and proteins that result from spontaneous decomposition of normal L-aspartyl and L-asparaginyl residues. It plays a role in the repair and/or degradation of damaged proteins. This is Protein-L-isoaspartate O-methyltransferase 1 from Nitrosococcus oceani (strain ATCC 19707 / BCRC 17464 / JCM 30415 / NCIMB 11848 / C-107).